Consider the following 1149-residue polypeptide: Potassium channel subfamily U member 1 (1149 aa).

Over 1-24 the chain is Extracellular; sequence MFQTKLRNETWEDLPKMSCTTEIQ. A helical membrane pass occupies residues 25-45; the sequence is AAFILSSFVTFFSGLIILLIF. Residues 46–101 are Cytoplasmic-facing; the sequence is RLIWRSVKKWQIIKGTGIILELFTSGTIARSHVRSLHFQGQFRDHIEMLLSAQTFV. A helical transmembrane segment spans residues 102 to 122; it reads GQVLVILVFVLSIGSLIIYFI. Over 123–138 the chain is Extracellular; it reads NSADPVGSCSSYEDKT. A helical transmembrane segment spans residues 139–159; the sequence is IPIDLVFNAFFSFYFGLRFMA. The Cytoplasmic segment spans residues 160-163; the sequence is ADDK. A helical transmembrane segment spans residues 164-184; it reads IKFWLEMNSIVDIFTIPPTFI. Over 185 to 188 the chain is Extracellular; sequence SYYL. A helical; Voltage-sensor transmembrane segment spans residues 189-209; that stretch reads KSNWLGLRFLRALRLLELPQI. The Cytoplasmic portion of the chain corresponds to 210-226; sequence LQILRAIKTSNSVKFSK. The helical transmembrane segment at 227-247 threads the bilayer; the sequence is LLSIILSTWFTAAGFIHLVEN. Topologically, residues 248–259 are extracellular; it reads SGDPWLKGRNSQ. Residues 260–282 constitute an intramembrane region (pore-forming); the sequence is NISYFESIYLVMATTSTVGFGDV. Positions 276–279 match the Selectivity for potassium motif; that stretch reads TVGF. Over 283 to 291 the chain is Extracellular; sequence VAKTSLGRT. Residues 292-312 form a helical membrane-spanning segment; it reads FIMFFTLGSLILFANYIPEMV. Residues 313 to 1149 are Cytoplasmic-facing; sequence ELFANKRKYT…EDPFAYSEPL (837 aa). RCK N-terminal domains lie at 331–473 and 713–884; these read KKFI…DNII and RNHI…EGSL. 2 disordered regions span residues 828–854 and 1118–1149; these read QIDSSSDPSPSVSEETPGYTNGHNEKS and SQIPLGDNAKENERKTSDEVYDEDPFAYSEPL. A compositionally biased stretch (low complexity) spans 830-840; the sequence is DSSSDPSPSVS. A compositionally biased stretch (basic and acidic residues) spans 1125–1135; sequence NAKENERKTSD.

This sequence belongs to the potassium channel family. Calcium-activated (TC 1.A.1.3) subfamily. KCa5.1/KCNU1 sub-subfamily. In terms of assembly, homotetramer; which constitutes the activated potassium channel. Interacts with LRRC52; this interaction changes channel gating properties, such as shifting gating to more negative potentials at a given pH. As to expression, testis-specific.

It localises to the cell membrane. The protein resides in the cell projection. The protein localises to the cilium. Its subcellular location is the flagellum membrane. It carries out the reaction K(+)(in) = K(+)(out). Regulated by changes in cytosolic pH; activated by alkalization. Activated by intracellular Ca(2+). Despite strong sequence similarity, human KCNU1 channels are significantly more sensitive to activation by internal Ca(2+) and less pH-sensitive than mouse KCNU1. VU0546110 acts as a selective inhibitor. The auxiliary subunit LRRC52 shifts the activation of KCNU1 to more negative potentials at a given pH. In terms of biological role, testis-specific potassium channel activated by both intracellular pH and membrane voltage that mediates export of K(+). Represents the primary spermatozoan K(+) current. The channel underlies a pH-triggered membrane hyperpolarization during the process of sperm capacitation, as sperm encounter the alkaline environment near the ovum in the female reproductive tract, thereby playing an essential for male fertility. The chain is Potassium channel subfamily U member 1 from Homo sapiens (Human).